Here is a 316-residue protein sequence, read N- to C-terminus: Apolipoprotein E (316 aa).

An N-terminal signal peptide occupies residues 1-18 (MKVLWVALVVALLAGCQA). Repeat copies occupy residues 79-100 (VLMEETMKEVKAYREELEGQLA), 101-122 (PMAQETQARVSKELQAAQARLG), 123-144 (SDMEDLRNRLAQYRSEVQAMLG), 145-166 (QSTEELRARMASHLRKLRKRLL), 167-188 (RDADDLKKRLAVYQAGASEGAE), 189-210 (RSVSAIRERLRPLVEQGQSRAA), 211-232 (TLSTQAAQPLLDRAEAWRQKLH), and 233-254 (GRLEEVGVRAQDRLDKMRQQLE). The interval 79–254 (VLMEETMKEV…RLDKMRQQLE (176 aa)) is 8 X 22 AA approximate tandem repeats. Position 142 is a methionine sulfoxide (methionine 142). Serine 146 bears the Phosphoserine mark. The LDL and other lipoprotein receptors binding stretch occupies residues 157 to 167 (HLRKLRKRLLR). Residue 161–164 (LRKR) coordinates heparin. Residues 209-289 (AATLSTQAAQ…SWFEPLVGDM (81 aa)) are lipid-binding and lipoprotein association. O-linked (GalNAc...) threonine glycosylation is present at threonine 211. 228 to 235 (RQKLHGRL) is a heparin binding site. The tract at residues 265-316 (SQIRLQAEAFQARLRSWFEPLVGDMQRQWAGLVEKVQLALHLSPTSPPSENH) is homooligomerization. Positions 277–289 (RLRSWFEPLVGDM) are specificity for association with VLDL.

It belongs to the apolipoprotein A1/A4/E family. In terms of assembly, homotetramer. May interact with ABCA1; functionally associated with ABCA1 in the biogenesis of HDLs. May interact with APP/A4 amyloid-beta peptide; the interaction is extremely stable in vitro but its physiological significance is unclear. May interact with MAPT. May interact with MAP2. In the cerebrospinal fluid, interacts with secreted SORL1. Interacts with PMEL; this allows the loading of PMEL luminal fragment on ILVs to induce fibril nucleation. Post-translationally, APOE exists as multiple glycosylated and sialylated glycoforms within cells and in plasma. The extent of glycosylation and sialylation are tissue and context specific. Glycated in plasma VLDL. In terms of processing, phosphorylated by FAM20C in the extracellular medium.

The protein resides in the secreted. It is found in the extracellular space. Its subcellular location is the extracellular matrix. It localises to the extracellular vesicle. The protein localises to the endosome. The protein resides in the multivesicular body. Functionally, APOE is an apolipoprotein, a protein associating with lipid particles, that mainly functions in lipoprotein-mediated lipid transport between organs via the plasma and interstitial fluids. APOE is a core component of plasma lipoproteins and is involved in their production, conversion and clearance. Apolipoproteins are amphipathic molecules that interact both with lipids of the lipoprotein particle core and the aqueous environment of the plasma. As such, APOE associates with chylomicrons, chylomicron remnants, very low density lipoproteins (VLDL) and intermediate density lipoproteins (IDL) but shows a preferential binding to high-density lipoproteins (HDL). It also binds a wide range of cellular receptors including the LDL receptor/LDLR and the very low-density lipoprotein receptor/VLDLR that mediate the cellular uptake of the APOE-containing lipoprotein particles. Finally, APOE also has a heparin-binding activity and binds heparan-sulfate proteoglycans on the surface of cells, a property that supports the capture and the receptor-mediated uptake of APOE-containing lipoproteins by cells. The polypeptide is Apolipoprotein E (APOE) (Capra hircus aegagrus (Wild goat)).